The primary structure comprises 200 residues: Somatotropin (200 aa).

An N-terminal signal peptide occupies residues 1-22 (MARVLVVLSVVVASLFFSQGAT). Histidine 38 contacts Zn(2+). A disulfide bond links cysteine 71 and cysteine 173. Residue glutamate 182 coordinates Zn(2+). An intrachain disulfide couples cysteine 190 to cysteine 198.

This sequence belongs to the somatotropin/prolactin family.

It is found in the secreted. Growth hormone plays an important role in growth control and is involved in the regulation of several anabolic processes. Implicated as an osmoregulatory substance important for seawater adaptation. The protein is Somatotropin (gh) of Heteropneustes fossilis (Stinging catfish).